The following is a 220-amino-acid chain: Guanylate kinase (220 aa).

A Guanylate kinase-like domain is found at 16-195 (GLMFVLSSPS…AFESVRSILR (180 aa)). Residue 23–30 (SPSGAGKT) coordinates ATP.

This sequence belongs to the guanylate kinase family.

It is found in the cytoplasm. It catalyses the reaction GMP + ATP = GDP + ADP. Functionally, essential for recycling GMP and indirectly, cGMP. In Rhodopseudomonas palustris (strain ATCC BAA-98 / CGA009), this protein is Guanylate kinase.